The following is a 152-amino-acid chain: Transcriptional repressor NrdR (152 aa).

The segment at 3–34 is a zinc-finger region; that stretch reads CPKCTSIEDKVIDSRISKEGSTIRRRRECLEC. In terms of domain architecture, ATP-cone spans 49-139; it reads IVVIKRDGRR…VYKEFRDVSE (91 aa).

This sequence belongs to the NrdR family. Zn(2+) serves as cofactor.

Negatively regulates transcription of bacterial ribonucleotide reductase nrd genes and operons by binding to NrdR-boxes. This chain is Transcriptional repressor NrdR, found in Opitutus terrae (strain DSM 11246 / JCM 15787 / PB90-1).